We begin with the raw amino-acid sequence, 128 residues long: Cytochrome c-type biogenesis protein CcmE (128 aa).

At 1–8 (MQKRVRNR) the chain is on the cytoplasmic side. Residues 9–29 (LITIIICFCSACLGISIILYN) traverse the membrane as a helical; Signal-anchor for type II membrane protein segment. The Periplasmic segment spans residues 30-128 (LEKNIVFFLP…KHDENYRPPQ (99 aa)). Residues H120 and Y124 each contribute to the heme site.

Belongs to the CcmE/CycJ family.

It is found in the cell inner membrane. Functionally, heme chaperone required for the biogenesis of c-type cytochromes. Transiently binds heme delivered by CcmC and transfers the heme to apo-cytochromes in a process facilitated by CcmF and CcmH. The sequence is that of Cytochrome c-type biogenesis protein CcmE from Rickettsia conorii (strain ATCC VR-613 / Malish 7).